We begin with the raw amino-acid sequence, 258 residues long: Elongation factor Ts (258 aa).

The interval 81–84 (TDFV) is involved in Mg(2+) ion dislocation from EF-Tu. The interval 216-258 (GLKPAEAPKVEETPPAPPEEPAPEPAPAAESKPAKKGSAKKKK) is disordered. Over residues 229-241 (PPAPPEEPAPEPA) the composition is skewed to pro residues. Over residues 249–258 (AKKGSAKKKK) the composition is skewed to basic residues.

The protein belongs to the EF-Ts family.

The protein resides in the cytoplasm. Functionally, associates with the EF-Tu.GDP complex and induces the exchange of GDP to GTP. It remains bound to the aminoacyl-tRNA.EF-Tu.GTP complex up to the GTP hydrolysis stage on the ribosome. The chain is Elongation factor Ts from Synechococcus sp. (strain JA-2-3B'a(2-13)) (Cyanobacteria bacterium Yellowstone B-Prime).